A 295-amino-acid polypeptide reads, in one-letter code: Pyridoxal 5'-phosphate synthase subunit PdxS (295 aa).

Asp-25 provides a ligand contact to D-ribose 5-phosphate. Lys-82 acts as the Schiff-base intermediate with D-ribose 5-phosphate in catalysis. Gly-154 serves as a coordination point for D-ribose 5-phosphate. Arg-166 is a binding site for D-glyceraldehyde 3-phosphate. D-ribose 5-phosphate is bound by residues Gly-215 and 236–237 (GS).

Belongs to the PdxS/SNZ family. In terms of assembly, in the presence of PdxT, forms a dodecamer of heterodimers.

It catalyses the reaction aldehydo-D-ribose 5-phosphate + D-glyceraldehyde 3-phosphate + L-glutamine = pyridoxal 5'-phosphate + L-glutamate + phosphate + 3 H2O + H(+). It participates in cofactor biosynthesis; pyridoxal 5'-phosphate biosynthesis. Catalyzes the formation of pyridoxal 5'-phosphate from ribose 5-phosphate (RBP), glyceraldehyde 3-phosphate (G3P) and ammonia. The ammonia is provided by the PdxT subunit. Can also use ribulose 5-phosphate and dihydroxyacetone phosphate as substrates, resulting from enzyme-catalyzed isomerization of RBP and G3P, respectively. The chain is Pyridoxal 5'-phosphate synthase subunit PdxS from Bacillus cereus (strain Q1).